The following is an 81-amino-acid chain: Large ribosomal subunit protein bL31 (81 aa).

Cys16, Cys18, Cys38, and Cys41 together coordinate Zn(2+).

The protein belongs to the bacterial ribosomal protein bL31 family. Type A subfamily. In terms of assembly, part of the 50S ribosomal subunit. Zn(2+) is required as a cofactor.

Functionally, binds the 23S rRNA. This chain is Large ribosomal subunit protein bL31, found in Mycobacterium sp. (strain JLS).